A 207-amino-acid chain; its full sequence is High mobility group protein B2 (207 aa).

2 DNA-binding regions (HMG box) span residues 9 to 79 (PRGK…KNYV) and 95 to 163 (PKRP…AAYR). Cysteine 23 and cysteine 45 each carry cysteine sulfonic acid (-SO3H); alternate. An intrachain disulfide couples cysteine 23 to cysteine 45. Basic and acidic residues predominate over residues 52 to 76 (MSSKEKGKFEEMAKGDKARYDREMK). The segment at 52 to 102 (MSSKEKGKFEEMAKGDKARYDREMKNYVPPKGEKKGKKKDPNAPKRPPSAF) is disordered. Cysteine 106 carries the post-translational modification Cysteine sulfonic acid (-SO3H). Over residues 162-172 (YRAKSKSDAGK) the composition is skewed to basic and acidic residues. Positions 162–207 (YRAKSKSDAGKKGPGRPAGSKKKAEPEEEEEEEEDEEEEEEEEDEE) are disordered. The span at 187 to 207 (PEEEEEEEEDEEEEEEEEDEE) shows a compositional bias: acidic residues.

Belongs to the HMGB family. In terms of processing, reduction/oxidation of cysteine residues Cys-23, Cys-45 and Cys-106 and a possible intramolecular disulfide bond involving Cys-23 and Cys-45 give rise to different redox forms with specific functional activities in various cellular compartments: 1- fully reduced HMGB2 (HMGB2C23hC45hC106h), 2- disulfide HMGB2 (HMGB2C23-C45C106h) and 3- sulfonyl HMGB2 (HMGB2C23soC45soC106so).

The protein resides in the nucleus. It localises to the chromosome. The protein localises to the cytoplasm. Its subcellular location is the secreted. In terms of biological role, multifunctional protein with various roles in different cellular compartments. May act in a redox sensitive manner. Associates with chromatin and binds DNA with a preference to non-canonical DNA structures such as single-stranded DNA. Can bent DNA and enhance DNA flexibility by looping thus providing a mechanism to promote activities on various gene promoters. Proposed to be involved in the innate immune response to nucleic acids by acting as a cytoplasmic promiscuous immunogenic DNA/RNA sensor. Involved in inflammatory response to antigenic stimulus coupled with pro-inflammatory activity. The protein is High mobility group protein B2 (HMGB2) of Gallus gallus (Chicken).